An 887-amino-acid chain; its full sequence is Beta-galactosidase 14 (887 aa).

Positions 1–31 (MSKSSRIRMKSRTRYLIAILLVISLCSKASS) are cleaved as a signal peptide. Residue Glu-197 is the Proton donor of the active site. Glu-268 acts as the Nucleophile in catalysis. Asn-269, Asn-300, Asn-395, and Asn-785 each carry an N-linked (GlcNAc...) asparagine glycan. The 87-residue stretch at 752-838 (KDMRLKAVMR…KTLAVQVKCE (87 aa)) folds into the SUEL-type lectin domain. Residues 838-852 (EKKEGKQDEKKKKED) show a composition bias toward basic and acidic residues. A disordered region spans residues 838 to 887 (EKKEGKQDEKKKKEDKDEEEEDDEDDDEEEEEEDKENKDTKDMENKNQDM). The segment covering 853-871 (KDEEEEDDEDDDEEEEEED) has biased composition (acidic residues). The segment covering 872–887 (KENKDTKDMENKNQDM) has biased composition (basic and acidic residues).

The protein belongs to the glycosyl hydrolase 35 family.

Its subcellular location is the secreted. It localises to the extracellular space. The protein localises to the apoplast. The enzyme catalyses Hydrolysis of terminal non-reducing beta-D-galactose residues in beta-D-galactosides.. The polypeptide is Beta-galactosidase 14 (BGAL14) (Arabidopsis thaliana (Mouse-ear cress)).